Consider the following 592-residue polypeptide: 2-succinyl-5-enolpyruvyl-6-hydroxy-3-cyclohexene-1-carboxylate synthase (592 aa).

Belongs to the TPP enzyme family. MenD subfamily. In terms of assembly, homodimer. Mg(2+) is required as a cofactor. Requires Mn(2+) as cofactor. The cofactor is thiamine diphosphate.

The enzyme catalyses isochorismate + 2-oxoglutarate + H(+) = 5-enolpyruvoyl-6-hydroxy-2-succinyl-cyclohex-3-ene-1-carboxylate + CO2. The protein operates within quinol/quinone metabolism; 1,4-dihydroxy-2-naphthoate biosynthesis; 1,4-dihydroxy-2-naphthoate from chorismate: step 2/7. It participates in quinol/quinone metabolism; menaquinone biosynthesis. Its function is as follows. Catalyzes the thiamine diphosphate-dependent decarboxylation of 2-oxoglutarate and the subsequent addition of the resulting succinic semialdehyde-thiamine pyrophosphate anion to isochorismate to yield 2-succinyl-5-enolpyruvyl-6-hydroxy-3-cyclohexene-1-carboxylate (SEPHCHC). The chain is 2-succinyl-5-enolpyruvyl-6-hydroxy-3-cyclohexene-1-carboxylate synthase from Leifsonia xyli subsp. xyli (strain CTCB07).